Consider the following 397-residue polypeptide: Dual specificity mitogen-activated protein kinase kinase 2 (397 aa).

Positions 1-21 (MAPKRRPVPLIIAPTGEGQST) are disordered. The 298-residue stretch at 69–366 (FDPICELGAG…LKMLMGHTFI (298 aa)) folds into the Protein kinase domain. ATP is bound by residues 75–83 (LGAGNGGVV) and Lys98. Asp191 acts as the Proton acceptor in catalysis. A phosphoserine; by RAF mark is found at Ser219 and Ser223. The tract at residues 284 to 306 (GGAEGHSMSPRQRPPGRPVSGHG) is disordered.

It belongs to the protein kinase superfamily. STE Ser/Thr protein kinase family. MAP kinase kinase subfamily. In terms of processing, phosphorylation on Ser/Thr by MAP kinase kinase kinases (RAF) positively regulates the kinase activity.

The enzyme catalyses L-seryl-[protein] + ATP = O-phospho-L-seryl-[protein] + ADP + H(+). The catalysed reaction is L-threonyl-[protein] + ATP = O-phospho-L-threonyl-[protein] + ADP + H(+). It catalyses the reaction L-tyrosyl-[protein] + ATP = O-phospho-L-tyrosyl-[protein] + ADP + H(+). Its function is as follows. Catalyzes the concomitant phosphorylation of a threonine and a tyrosine residue in a Thr-Glu-Tyr sequence located in MAP kinases. This is Dual specificity mitogen-activated protein kinase kinase 2 (map2k2) from Cyprinus carpio (Common carp).